The following is a 358-amino-acid chain: Ethanol acetyltransferase 1 (358 aa).

Positions 59-166 (PIVFIHGLFG…NAPINQPHIS (108 aa)) constitute an AB hydrolase-1 domain. Residues Ser-132, Asp-156, and His-305 each act as charge relay system in the active site.

It belongs to the AB hydrolase superfamily.

Its subcellular location is the mitochondrion. The catalysed reaction is ethanol + acetyl-CoA = ethyl acetate + CoA. The enzyme catalyses acetyl-CoA + H2O = acetate + CoA + H(+). It carries out the reaction ethyl acetate + H2O = ethanol + acetate + H(+). Alcohol acetyltransferase that catalyzes the synthesis of ethyl acetate from ethanol and acetyl-CoA. Can also function as a thioesterase by hydrolyzing acetyl-CoA in the absence of ethanol, as well as esterase hydrolyzing ethyl acetate. The chain is Ethanol acetyltransferase 1 (EAT1) from Eremothecium cymbalariae (strain CBS 270.75 / DBVPG 7215 / KCTC 17166 / NRRL Y-17582) (Yeast).